A 698-amino-acid polypeptide reads, in one-letter code: Transcription factor cwo (698 aa).

The basic motif; degenerate stretch occupies residues 62–75 (QDPLSHRIIEKRRR). The bHLH domain occupies 62 to 117 (QDPLSHRIIEKRRRDRMNSCLADLSRLIPPQYQRKGRGRIEKTEIIEMAIRHLKHL). The interval 76–117 (DRMNSCLADLSRLIPPQYQRKGRGRIEKTEIIEMAIRHLKHL) is helix-loop-helix motif. An Orange domain is found at 128-159 (YRSGYMDCMKEAAKFLYDVHMQDFCHRLLGRL). 2 disordered regions span residues 257 to 319 (SSPA…ASST) and 349 to 369 (STAP…FESS). The segment covering 280-318 (APPAADNVPSNSTGSGSAAACAGGNSNSSGSNSSNAASS) has biased composition (low complexity). Basic and acidic residues predominate over residues 359–369 (TDSSHHDFESS).

Expressed in adult brain where it is detected in the dorsal lateral neurons, small and large ventral lateral neurons and dorsal neurons 1, 2 and 3 (at protein level). Expressed at constant levels in a 12 hour light / 12 hour day cycle (at protein level). Strongly expressed in pacemaker neurons. In adults, mRNA expression oscillates in a circadian manner with a peak at around 14 hour Zeitgeber time. mRNA levels oscillate in a rhythmic manner in both 12 hour light / 12 hour dark and constant dark conditions with a morning peak around the time of lights-on and an evening peak around the time of lights-off in light/dark conditions. During stage 8 of embryonic development, expressed in the anterior and posterior midgut primordia and expression in the gut continues throughout embryonic development. During germ band retraction, expression is initiated in many tissues in a prominent segmentally repeated pattern. Later, expression is ubiquitous but has higher levels in segmentally repeated clusters of cells. Expression is also found in cells of the amnioserosa, in the head region, in posterior spiracles and in tracheal trees.

The protein resides in the nucleus. Functionally, plays a role in the regulation of circadian rhythms. Transcriptional repressor which inhibits Clock-mediated transcriptional activation by binding to E boxes in the promoters of Clock target genes and repressing their transcription. E box binding activity is time-dependent with higher binding activity seen in the early morning (zeitgeber time 2) than early evening (zeitgeber time 14) and is dependent on the presence of the circadian protein per. It is likely that per binds to Clock-cycle heterodimers, reducing their affinity for E box binding and allowing cwo to bind instead. Negatively regulates its own expression. The polypeptide is Transcription factor cwo (Drosophila melanogaster (Fruit fly)).